The following is a 301-amino-acid chain: MSQRTAPAPFLLKTYQLVDDAATDDVISWNEIGTTFVVWKTAEFAKDLLPKYFKHNNFSSFVRQLNTYGFRKIVPDKWEFANENFKRGQKELLTAIRRRKTVTSTPAGGKSVAAGASASPDNSGDDIGSSSTSSPDSKNPGSVDTPGKLSQFTDLSDENEKLKKDNQMLSSELVQAKKQCNELVAFLSQYVKVAPDMINRIMSQGTPSGSSLEELVKEVGGVKDLEEQGSYNDNDDKEDDDEKGDTLKLFGVLLKEKKKKRGPDENIETCGGRGKMMKTVDYNGPWMKMSSPAGESSKVCN.

Residues 7 to 101 (PAPFLLKTYQ…LLTAIRRRKT (95 aa)) mediate DNA binding. Disordered stretches follow at residues 103–160 (TSTP…DENE) and 221–244 (GVKDLEEQGSYNDNDDKEDDDEKG). The span at 107–142 (AGGKSVAAGASASPDNSGDDIGSSSTSSPDSKNPGS) shows a compositional bias: low complexity. Residues 233–243 (DNDDKEDDDEK) are compositionally biased toward acidic residues.

The protein belongs to the HSF family. As to quaternary structure, homotrimer. In terms of processing, exhibits temperature-dependent phosphorylation.

The protein localises to the nucleus. Its function is as follows. DNA-binding protein that specifically binds heat shock promoter elements (HSE) and activates transcription. The polypeptide is Heat shock factor protein HSF24 (HSF24) (Solanum peruvianum (Peruvian tomato)).